A 187-amino-acid chain; its full sequence is Peptidyl-tRNA hydrolase (187 aa).

Tyrosine 14 lines the tRNA pocket. Histidine 19 functions as the Proton acceptor in the catalytic mechanism. Residues tyrosine 64 and asparagine 66 each coordinate tRNA.

It belongs to the PTH family. In terms of assembly, monomer.

The protein localises to the cytoplasm. It carries out the reaction an N-acyl-L-alpha-aminoacyl-tRNA + H2O = an N-acyl-L-amino acid + a tRNA + H(+). Hydrolyzes ribosome-free peptidyl-tRNAs (with 1 or more amino acids incorporated), which drop off the ribosome during protein synthesis, or as a result of ribosome stalling. In terms of biological role, catalyzes the release of premature peptidyl moieties from peptidyl-tRNA molecules trapped in stalled 50S ribosomal subunits, and thus maintains levels of free tRNAs and 50S ribosomes. The chain is Peptidyl-tRNA hydrolase from Carboxydothermus hydrogenoformans (strain ATCC BAA-161 / DSM 6008 / Z-2901).